Reading from the N-terminus, the 289-residue chain is Mitochondrial fission regulator 1-like (289 aa).

At Thr-27 the chain carries Phosphothreonine. Phosphoserine is present on residues Ser-38, Ser-100, Ser-107, Ser-221, Ser-222, Ser-235, Ser-258, and Ser-270.

It belongs to the MTFR1 family. Phosphorylated by AMPK. Upon stress, phosphorylation by AMPK is sufficient to induce mitochondrial fragmentation.

Its subcellular location is the mitochondrion outer membrane. Its function is as follows. Mitochondrial protein required for adaptation of miochondrial dynamics to metabolic changes. Regulates mitochondrial morphology at steady state and mediates AMPK-dependent stress-induced mitochondrial fragmentation via the control of OPA1 levels. This chain is Mitochondrial fission regulator 1-like (Mtfr1l), found in Rattus norvegicus (Rat).